Consider the following 403-residue polypeptide: Putative F-box protein At5g41500 (403 aa).

The F-box domain occupies 2–47 (ATTISNLPRELIEEILSRVPLRAMKAMRLTCKSWNNLSKSESFMKM).

The polypeptide is Putative F-box protein At5g41500 (Arabidopsis thaliana (Mouse-ear cress)).